A 375-amino-acid chain; its full sequence is Tryptophan dimethylallyltransferase (375 aa).

L-tryptophan-binding positions include 83–84 (IL) and E92. Residues R103, K189, and Y191 each coordinate substrate. Y193 and R246 together coordinate L-tryptophan. 5 residues coordinate substrate: R259, K261, Y263, Q345, and Y347.

It belongs to the tryptophan dimethylallyltransferase family. In terms of assembly, homodimer.

The enzyme catalyses L-tryptophan + dimethylallyl diphosphate = 4-(3-methylbut-2-enyl)-L-tryptophan + diphosphate. It functions in the pathway alkaloid biosynthesis; ergot alkaloid biosynthesis. Its function is as follows. Tryptophan dimethylallyltransferase; part of the gene cluster that mediates the biosynthesis of fungal ergot alkaloid. DmaW catalyzes the first step of ergot alkaloid biosynthesis by condensing dimethylallyl diphosphate (DMAP) and tryptophan to form 4-dimethylallyl-L-tryptophan. The second step is catalyzed by the methyltransferase easF that methylates 4-dimethylallyl-L-tryptophan in the presence of S-adenosyl-L-methionine, resulting in the formation of 4-dimethylallyl-L-abrine. The catalase easC and the FAD-dependent oxidoreductase easE then transform 4-dimethylallyl-L-abrine to chanoclavine-I which is further oxidized by easD in the presence of NAD(+), resulting in the formation of chanoclavine-I aldehyde. Chanoclavine-I aldehyde is the precursor of ergoamides and ergopeptines in Clavicipitaceae, and clavine-type alcaloids such as fumiclavine in Trichocomaceae. However, the metabolites downstream of chanoclavine-I aldehyde in Arthrodermataceae have not been identified yet. The sequence is that of Tryptophan dimethylallyltransferase from Trichophyton verrucosum (strain HKI 0517).